Consider the following 438-residue polypeptide: (S)-3,5-dihydroxyphenylglycine transaminase (438 aa).

Lys266 is modified (N6-(pyridoxal phosphate)lysine).

This sequence belongs to the class-I pyridoxal-phosphate-dependent aminotransferase family. Pyridoxal 5'-phosphate serves as cofactor.

The enzyme catalyses (S)-3,5-dihydroxyphenylglycine + 2-oxoglutarate = 2-(3,5-dihydroxyphenyl)-2-oxoacetate + L-glutamate. Its pathway is antibiotic biosynthesis; vancomycin biosynthesis. Its function is as follows. Catalyzes the transamination of p-hydroxybenzoylformate to L-p-hydroxyphenylglycine as part of the biosynthesis of the (S)-3,5-dihydroxyphenylglycine constituent of the glycopeptide antibiotic chloroeremomycin, a member of the vancomycin group of antibiotics. The protein is (S)-3,5-dihydroxyphenylglycine transaminase (hpgT) of Amycolatopsis orientalis (Nocardia orientalis).